Consider the following 299-residue polypeptide: UDP-N-acetylenolpyruvoylglucosamine reductase (299 aa).

One can recognise an FAD-binding PCMH-type domain in the interval 28–193 (KVGGPADILA…LSAKFELQAG (166 aa)). Residue arginine 172 is part of the active site. Serine 222 serves as the catalytic Proton donor. Residue glutamate 292 is part of the active site.

It depends on FAD as a cofactor.

Its subcellular location is the cytoplasm. The catalysed reaction is UDP-N-acetyl-alpha-D-muramate + NADP(+) = UDP-N-acetyl-3-O-(1-carboxyvinyl)-alpha-D-glucosamine + NADPH + H(+). It participates in cell wall biogenesis; peptidoglycan biosynthesis. Functionally, cell wall formation. The chain is UDP-N-acetylenolpyruvoylglucosamine reductase from Lactococcus lactis subsp. cremoris (strain MG1363).